An 801-amino-acid chain; its full sequence is MTDGLNKAAVFICHCSGNISEHVDIDAVKKTLKAEGISVFDYEYMCSSQGQALIKKKIVEGSLDRVVIGSCTPSKHGTLFKKCIQETGLNRAGLEIANLREQCAWVHPDRTGATEKALSLLRAKLKRLENVEPLDEIKVDIAQQALVIGGGIAGITAALNLADNGVSTVLVENNSSIGGQMAKIGKIFSPDKLAEECAMCSLSPLMNEVAAHPKITLLTRTEVESLSGSAGNFTIRLRKKPRYVKDSCTACGRCSRVCPVQVEDEFNCGHMDKKAISLRFSQSVPKIYCIDPDYCLQLNGEACGKCADACKNEAIDFSQKEEIVELNVGAVVVATGFEEYDVSQKPQYGYGIFENVLTQMELARVLGINGPTKGELLRVSDFSKASSDPTPATCDSRCEDSSDESQGTDTPKRIVMIQCVGSRDEKEGGNRYCSRYCCMAALKHASLIKKKHPETEITICYIDVRAFGFYENYYRAVQETGVNFVRGRPAEVIEKPDKSLVVRVEDTLDQKMRELPADLVVLSAAMVPSPGTRKIASVLNLSQDESGFIKERHSKLKPVDSSLDGIFVCGTAQSPKDVTDTIAQAGLAAVRARAFITDSPKVLDNEIATINQLLCTRCGECLKCPFDALSVNESGRVVLDPLICTGCGYCTKLCGEGAVQIAGFTKLQLKAEMEGVLEEGDVLGFVNSGIASLTCDNIGNSVLTYPSNVKLIKVPTGLVVDRDLVLHAFRHGASSVLFVEDPPDNPRAEVIYPLTVSHFEELKEELGDSGNRIYFKKAYVPNTKGLAGTFTSLAREGEMIR.

FAD is bound at residue 149–172 (GGGIAGITAALNLADNGVSTVLVE). 2 4Fe-4S ferredoxin-type domains span residues 239–269 (KKPR…FNCG) and 285–320 (PKIY…FSQK). [4Fe-4S] cluster contacts are provided by C248, C251, C254, C258, C295, C303, C306, and C310. The tract at residues 382 to 409 (FSKASSDPTPATCDSRCEDSSDESQGTD) is disordered. 4Fe-4S ferredoxin-type domains lie at 606 to 634 (EIAT…VNES) and 635 to 664 (GRVV…IAGF). 8 residues coordinate [4Fe-4S] cluster: C615, C618, C621, C624, C644, C647, C650, and C654.

This sequence belongs to the HdrA family. As to quaternary structure, the ferredoxin:CoB-CoM heterodisulfide reductase is composed of three subunits; HdrA1, HdrB1 and HdrC1. [4Fe-4S] cluster is required as a cofactor. Requires FAD as cofactor.

The protein localises to the cytoplasm. The catalysed reaction is coenzyme B + coenzyme M + 2 oxidized [2Fe-2S]-[ferredoxin] = coenzyme M-coenzyme B heterodisulfide + 2 reduced [2Fe-2S]-[ferredoxin] + 2 H(+). Its pathway is cofactor metabolism; coenzyme M-coenzyme B heterodisulfide reduction; coenzyme B and coenzyme M from coenzyme M-coenzyme B heterodisulfide: step 1/1. Part of a complex that catalyzes the reversible reduction of CoM-S-S-CoB to the thiol-coenzymes H-S-CoM (coenzyme M) and H-S-CoB (coenzyme B). Probably involved in methylotrophic methanogenesis but not in aceticlastic methanogenesis. This is Ferredoxin:CoB-CoM heterodisulfide reductase subunit A from Methanosarcina acetivorans (strain ATCC 35395 / DSM 2834 / JCM 12185 / C2A).